The following is an 874-amino-acid chain: Probable inorganic carbon transporter subunit DabA (874 aa).

Cys-398, Asp-400, His-580, and Cys-595 together coordinate Zn(2+).

It belongs to the inorganic carbon transporter (TC 9.A.2) DabA family. In terms of assembly, forms a complex with DabB. Zn(2+) serves as cofactor.

The protein resides in the cell membrane. Its function is as follows. Part of an energy-coupled inorganic carbon pump. The polypeptide is Probable inorganic carbon transporter subunit DabA (Bacillus cereus (strain AH820)).